The chain runs to 343 residues: Dihydroorotase (343 aa).

Positions 13 and 15 each coordinate Zn(2+). Substrate is bound by residues 15 to 17 (HLR) and Asn-41. Residues Lys-99, His-136, and His-174 each coordinate Zn(2+). Lys-99 bears the N6-carboxylysine mark. His-136 is a binding site for substrate. Residue Leu-219 coordinates substrate. Asp-247 contacts Zn(2+). Residue Asp-247 is part of the active site. The substrate site is built by His-251 and Ala-263.

Belongs to the metallo-dependent hydrolases superfamily. DHOase family. Class II DHOase subfamily. As to quaternary structure, homodimer. Zn(2+) is required as a cofactor.

It catalyses the reaction (S)-dihydroorotate + H2O = N-carbamoyl-L-aspartate + H(+). It functions in the pathway pyrimidine metabolism; UMP biosynthesis via de novo pathway; (S)-dihydroorotate from bicarbonate: step 3/3. Its function is as follows. Catalyzes the reversible cyclization of carbamoyl aspartate to dihydroorotate. The polypeptide is Dihydroorotase (Shewanella putrefaciens (strain CN-32 / ATCC BAA-453)).